A 422-amino-acid polypeptide reads, in one-letter code: Acylglycerol kinase, mitochondrial (422 aa).

Lys-6 is modified (N6-acetyllysine). The segment at 15–31 is hydrophobic; the sequence is TTAGLCLLTWGGHWLYG. The DAGKc domain maps to 58–199; the sequence is AQVKKATVFL…LDVLQIKGEK (142 aa). The segment at 249 to 271 is disordered; sequence QASISYTGPTERPPSEPEETPVQ.

This sequence belongs to the AGK family. As to quaternary structure, component of the TIM22 complex, which core is composed of TIMM22, associated with TIMM10 (TIMM10A and/or TIMM10B), TIMM9, AGK and TIMM29. Interacts with SMIM26. Mg(2+) is required as a cofactor.

The protein localises to the mitochondrion inner membrane. The protein resides in the mitochondrion intermembrane space. It catalyses the reaction a monoacylglycerol + ATP = a monoacyl-sn-glycero-3-phosphate + ADP + H(+). It carries out the reaction a 1,2-diacyl-sn-glycerol + ATP = a 1,2-diacyl-sn-glycero-3-phosphate + ADP + H(+). The enzyme catalyses an N-acylsphing-4-enine + ATP = an N-acylsphing-4-enine 1-phosphate + ADP + H(+). The catalysed reaction is 1-(9Z-octadecenoyl)-sn-glycerol + ATP = 1-(9Z-octadecenoyl)-sn-glycero-3-phosphate + ADP + H(+). It catalyses the reaction 1,2-di-(9Z-octadecenoyl)-sn-glycerol + ATP = 1,2-di-(9Z-octadecenoyl)-sn-glycero-3-phosphate + ADP + H(+). It carries out the reaction a 1-acyl-sn-glycerol + ATP = a 1-acyl-sn-glycero-3-phosphate + ADP + H(+). The enzyme catalyses 1-hexadecanoyl-sn-glycerol + ATP = 1-hexadecanoyl-sn-glycero-3-phosphate + ADP + H(+). The catalysed reaction is a 2-acylglycerol + ATP = a 2-acyl-sn-glycerol 3-phosphate + ADP + H(+). It catalyses the reaction 2-(5Z,8Z,11Z,14Z-eicosatetraenoyl)-glycerol + ATP = 2-(5Z,8Z,11Z,14Z-eicosatetraenoyl)-sn-glycero-3-phosphate + ADP + H(+). It carries out the reaction 1-(5Z,8Z,11Z,14Z-eicosatetraenoyl)-sn-glycerol + ATP = 1-(5Z,8Z,11Z,14Z-eicosatetraenoyl)-sn-glycero-3-phosphate + ADP + H(+). The enzyme catalyses N-(hexanoyl)sphing-4-enine + ATP = N-hexanoylsphing-4-enine 1-phosphate + ADP + H(+). The protein operates within lipid metabolism; glycerolipid metabolism. Functionally, lipid kinase that can phosphorylate both monoacylglycerol and diacylglycerol to form lysophosphatidic acid (LPA) and phosphatidic acid (PA), respectively. Phosphorylates ceramide but not sphingosine. Phosphorylates 1,2-dioleoylglycerol more rapidly than 2,3-dioleoylglycerol. Independently of its lipid kinase activity, acts as a component of the TIM22 complex. The TIM22 complex mediates the import and insertion of multi-pass transmembrane proteins into the mitochondrial inner membrane by forming a twin-pore translocase that uses the membrane potential as the external driving force. In the TIM22 complex, required for the import of a subset of metabolite carriers into mitochondria, such as ANT1/SLC25A4 and SLC25A24, while it is not required for the import of TIMM23. Overexpression increases the formation and secretion of LPA, resulting in transactivation of EGFR and activation of the downstream MAPK signaling pathway, leading to increased cell growth. The chain is Acylglycerol kinase, mitochondrial from Pongo abelii (Sumatran orangutan).